A 393-amino-acid polypeptide reads, in one-letter code: NAD(P)H-quinone oxidoreductase subunit H, chloroplastic (393 aa).

It belongs to the complex I 49 kDa subunit family. In terms of assembly, NDH is composed of at least 16 different subunits, 5 of which are encoded in the nucleus.

The protein resides in the plastid. The protein localises to the chloroplast thylakoid membrane. It catalyses the reaction a plastoquinone + NADH + (n+1) H(+)(in) = a plastoquinol + NAD(+) + n H(+)(out). The catalysed reaction is a plastoquinone + NADPH + (n+1) H(+)(in) = a plastoquinol + NADP(+) + n H(+)(out). In terms of biological role, NDH shuttles electrons from NAD(P)H:plastoquinone, via FMN and iron-sulfur (Fe-S) centers, to quinones in the photosynthetic chain and possibly in a chloroplast respiratory chain. The immediate electron acceptor for the enzyme in this species is believed to be plastoquinone. Couples the redox reaction to proton translocation, and thus conserves the redox energy in a proton gradient. The chain is NAD(P)H-quinone oxidoreductase subunit H, chloroplastic from Ipomoea purpurea (Common morning glory).